The sequence spans 203 residues: Imidazoleglycerol-phosphate dehydratase (203 aa).

Belongs to the imidazoleglycerol-phosphate dehydratase family.

It localises to the cytoplasm. The enzyme catalyses D-erythro-1-(imidazol-4-yl)glycerol 3-phosphate = 3-(imidazol-4-yl)-2-oxopropyl phosphate + H2O. It participates in amino-acid biosynthesis; L-histidine biosynthesis; L-histidine from 5-phospho-alpha-D-ribose 1-diphosphate: step 6/9. The polypeptide is Imidazoleglycerol-phosphate dehydratase (Helicobacter hepaticus (strain ATCC 51449 / 3B1)).